The sequence spans 609 residues: MCGIVGAVAQRDIAEILIEGLRRLEYRGYDSAGLAVVDSEGHLTRLRRVGKVHALSDAAEKQDLHGGTGIAHTRWATHGEPSEANAHPHVSDYISVVHNGIIENHEPLRELLISRGYRFSSETDTEVIAHLVHWEQQQGGSLLEVVKRVIPQLRGAYGTVVMDSRDPSRLIAARSGSPLVIGCGVGENFIASDQLALLPVTRRFIFLEEGDVVEVTRRSISIFDKQGNAIERPEIESQVQYDAGDKGIYRHYMQKEIYEQPMAIKNTLEGRLSHGMIDLSELGPKADALLAEVQHIQIIACGTSYNSGMVSRYWFESLAGVPCDVEIASEFRYRKSAVRPNSLLITLSQSGETADTLAALRLSKELGYLGSLAICNVAGSSLVRESDLALMTKAGTEIGVASTKAFTTQLTVLLMLVGRIGKLKGADASLEHDIVHALQALPARIEQMLSLDKTIEALAEGFSDKHHALFLGRGDQYPIAMEGALKLKEISYIHAEAYAAGELKHGPLALIDADMPVIVVAPNNELLEKLKSNIEEVRARGGLLYVFADQDAGFTDSEGMKIIQLPHVEEIIAPIFYTVPLQLLSYHVALIKGTDVDQPRNLAKSVTVE.

Cys-2 (nucleophile; for GATase activity) is an active-site residue. Residues 2-218 (CGIVGAVAQR…EGDVVEVTRR (217 aa)) enclose the Glutamine amidotransferase type-2 domain. 2 consecutive SIS domains span residues 286 to 426 (ADAL…LKGA) and 458 to 599 (LAEG…VDQP). Lys-604 acts as the For Fru-6P isomerization activity in catalysis.

Homodimer.

It localises to the cytoplasm. The catalysed reaction is D-fructose 6-phosphate + L-glutamine = D-glucosamine 6-phosphate + L-glutamate. In terms of biological role, catalyzes the first step in hexosamine metabolism, converting fructose-6P into glucosamine-6P using glutamine as a nitrogen source. This chain is Glutamine--fructose-6-phosphate aminotransferase [isomerizing], found in Yersinia pestis.